A 310-amino-acid chain; its full sequence is Porphobilinogen deaminase (310 aa).

C242 carries the S-(dipyrrolylmethanemethyl)cysteine modification.

This sequence belongs to the HMBS family. In terms of assembly, monomer. Dipyrromethane is required as a cofactor.

It carries out the reaction 4 porphobilinogen + H2O = hydroxymethylbilane + 4 NH4(+). It participates in porphyrin-containing compound metabolism; protoporphyrin-IX biosynthesis; coproporphyrinogen-III from 5-aminolevulinate: step 2/4. Tetrapolymerization of the monopyrrole PBG into the hydroxymethylbilane pre-uroporphyrinogen in several discrete steps. The protein is Porphobilinogen deaminase of Halorhodospira halophila (strain DSM 244 / SL1) (Ectothiorhodospira halophila (strain DSM 244 / SL1)).